Reading from the N-terminus, the 1004-residue chain is 2-oxoglutarate dehydrogenase E1 component (1004 aa).

This sequence belongs to the alpha-ketoglutarate dehydrogenase family. In terms of assembly, homodimer. Part of the 2-oxoglutarate dehydrogenase (OGDH) complex composed of E1 (2-oxoglutarate dehydrogenase), E2 (dihydrolipoamide succinyltransferase) and E3 (dihydrolipoamide dehydrogenase); the complex contains multiple copies of the three enzymatic components (E1, E2 and E3). Requires thiamine diphosphate as cofactor.

The catalysed reaction is N(6)-[(R)-lipoyl]-L-lysyl-[protein] + 2-oxoglutarate + H(+) = N(6)-[(R)-S(8)-succinyldihydrolipoyl]-L-lysyl-[protein] + CO2. In terms of biological role, E1 component of the 2-oxoglutarate dehydrogenase (OGDH) complex which catalyzes the decarboxylation of 2-oxoglutarate, the first step in the conversion of 2-oxoglutarate to succinyl-CoA and CO(2). The protein is 2-oxoglutarate dehydrogenase E1 component of Brucella melitensis biotype 2 (strain ATCC 23457).